A 734-amino-acid polypeptide reads, in one-letter code: Diacylglycerol kinase alpha (734 aa).

2 consecutive EF-hand domains span residues 109–144 (RPEDKLEFTFKLYDTDRNGILDSSEVDRIIIQMMRM) and 154–189 (ELRPILQEMMKEIDYDGSGSVSLAEWLRAGATTVPL). Residues Asp-122, Asp-124, Asn-126, Glu-133, Asp-167, Asp-169, Ser-171, Ser-173, and Glu-178 each contribute to the Ca(2+) site. Phorbol-ester/DAG-type zinc fingers lie at residues 204 to 252 (QHMW…ALPC) and 268 to 318 (SHVW…GHEC). Positions 371 to 505 (SNTHPLLVFV…MDRWSVEVIP (135 aa)) constitute a DAGKc domain. The residue at position 483 (Lys-483) is an N6-acetyllysine.

It belongs to the eukaryotic diacylglycerol kinase family. In terms of assembly, monomer.

The protein resides in the cytoplasm. Its subcellular location is the cytosol. It carries out the reaction a 1,2-diacyl-sn-glycerol + ATP = a 1,2-diacyl-sn-glycero-3-phosphate + ADP + H(+). The catalysed reaction is a 1-O-alkyl-sn-glycerol + ATP = a 1-O-alkyl-sn-glycero-3-phosphate + ADP + H(+). It catalyses the reaction 1-O-alkyl-2-acyl-sn-glycerol + ATP = 1-O-alkyl-2-acyl-sn-glycero-3-phosphate + ADP + H(+). The enzyme catalyses 1,2-dihexadecanoyl-sn-glycerol + ATP = 1,2-dihexadecanoyl-sn-glycero-3-phosphate + ADP + H(+). It carries out the reaction 1-hexadecanoyl-2-(9Z-octadecenoyl)-sn-glycerol + ATP = 1-hexadecanoyl-2-(9Z-octadecenoyl)-sn-glycero-3-phosphate + ADP + H(+). The catalysed reaction is 2-(9Z-octadecenoyl)-glycerol + ATP = 2-(9Z-octadecenoyl)-sn-glycero-3-phosphate + ADP + H(+). It catalyses the reaction 1,2-di-(9Z-octadecenoyl)-sn-glycerol + ATP = 1,2-di-(9Z-octadecenoyl)-sn-glycero-3-phosphate + ADP + H(+). The enzyme catalyses 1-octadecanoyl-2-(5Z,8Z,11Z,14Z-eicosatetraenoyl)-sn-glycerol + ATP = 1-octadecanoyl-2-(5Z,8Z,11Z,14Z-eicosatetraenoyl)-sn-glycero-3-phosphate + ADP + H(+). It carries out the reaction 1,2-didecanoyl-sn-glycerol + ATP = 1,2-didecanoyl-sn-glycero-3-phosphate + ADP + H(+). The catalysed reaction is 1-O-hexadecyl-2-acetyl-sn-glycerol + ATP = 1-O-hexadecyl-2-acetyl-sn-glycero-3-phosphate + ADP + H(+). It catalyses the reaction 1-O-hexadecyl-2-(5Z,8Z,11Z,14Z-eicosatetraenoyl)-sn-glycerol + ATP = 1-O-hexadecyl-2-(5Z,8Z,11Z,14Z-eicosatetraenoyl)-sn-glycero-3-phosphate + ADP + H(+). The enzyme catalyses 1-O-hexadecyl-2-(9Z-octadecenoyl)-sn-glycerol + ATP = 1-O-hexadecyl-2-(9Z-octadecenoyl)-sn-glycero-3-phosphate + ADP + H(+). It carries out the reaction 1-O-hexadecyl-sn-glycerol + ATP = 1-O-hexadecyl-sn-glycero-3-phosphate + ADP + H(+). The protein operates within lipid metabolism; glycerolipid metabolism. Its activity is regulated as follows. Stimulated by calcium and phosphatidylserine. Functionally, diacylglycerol kinase that converts diacylglycerol/DAG into phosphatidic acid/phosphatidate/PA and regulates the respective levels of these two bioactive lipids. Thereby, acts as a central switch between the signaling pathways activated by these second messengers with different cellular targets and opposite effects in numerous biological processes. Also plays an important role in the biosynthesis of complex lipids. Can also phosphorylate 1-alkyl-2-acylglycerol in vitro as efficiently as diacylglycerol provided it contains an arachidonoyl group. Also involved in the production of alkyl-lysophosphatidic acid, another bioactive lipid, through the phosphorylation of 1-alkyl-2-acetyl glycerol. The sequence is that of Diacylglycerol kinase alpha (DGKA) from Bos taurus (Bovine).